Reading from the N-terminus, the 292-residue chain is NAD kinase (292 aa).

Asp-73 functions as the Proton acceptor in the catalytic mechanism. Residues 73–74 (DG), 147–148 (NE), His-158, Arg-175, Asp-177, 188–193 (TAYSLS), and Gln-247 contribute to the NAD(+) site.

Belongs to the NAD kinase family. A divalent metal cation serves as cofactor.

Its subcellular location is the cytoplasm. It carries out the reaction NAD(+) + ATP = ADP + NADP(+) + H(+). Involved in the regulation of the intracellular balance of NAD and NADP, and is a key enzyme in the biosynthesis of NADP. Catalyzes specifically the phosphorylation on 2'-hydroxyl of the adenosine moiety of NAD to yield NADP. The chain is NAD kinase from Escherichia coli O7:K1 (strain IAI39 / ExPEC).